The following is a 364-amino-acid chain: Pectinesterase 1 (364 aa).

Residues 1-22 (MSCIAVEAVLLGILLYIPIVLS) form the signal peptide. N-linked (GlcNAc...) asparagine glycosylation is present at Asn103. Asp220 is a catalytic residue.

It belongs to the pectinesterase family. In terms of processing, glycosylated. Expressed in pollen.

The protein localises to the secreted. The enzyme catalyses [(1-&gt;4)-alpha-D-galacturonosyl methyl ester](n) + n H2O = [(1-&gt;4)-alpha-D-galacturonosyl](n) + n methanol + n H(+). It participates in glycan metabolism; pectin degradation; 2-dehydro-3-deoxy-D-gluconate from pectin: step 1/5. Catalyzes the demethylesterification of homogalacturonan components of pectin. May be involved in pollen tube development. The polypeptide is Pectinesterase 1 (Olea europaea (Common olive)).